The primary structure comprises 466 residues: Sulfate adenylyltransferase subunit 1 (466 aa).

Residues 22-237 (KELVRFLTCG…LNTIDVKTQE (216 aa)) enclose the tr-type G domain. Residues 31–38 (GSVDDGKS) form a G1 region. 31–38 (GSVDDGKS) contributes to the GTP binding site. A G2 region spans residues 89–93 (GITID). Positions 110-113 (DTPG) are G3. GTP contacts are provided by residues 110–114 (DTPGH) and 165–168 (NKMD). The segment at 165–168 (NKMD) is G4. The segment at 202–204 (SAL) is G5.

It belongs to the TRAFAC class translation factor GTPase superfamily. Classic translation factor GTPase family. CysN/NodQ subfamily. Heterodimer composed of CysD, the smaller subunit, and CysN.

It catalyses the reaction sulfate + ATP + H(+) = adenosine 5'-phosphosulfate + diphosphate. Its pathway is sulfur metabolism; hydrogen sulfide biosynthesis; sulfite from sulfate: step 1/3. Its function is as follows. With CysD forms the ATP sulfurylase (ATPS) that catalyzes the adenylation of sulfate producing adenosine 5'-phosphosulfate (APS) and diphosphate, the first enzymatic step in sulfur assimilation pathway. APS synthesis involves the formation of a high-energy phosphoric-sulfuric acid anhydride bond driven by GTP hydrolysis by CysN coupled to ATP hydrolysis by CysD. This Colwellia psychrerythraea (strain 34H / ATCC BAA-681) (Vibrio psychroerythus) protein is Sulfate adenylyltransferase subunit 1.